Consider the following 284-residue polypeptide: 4-hydroxy-3-methylbut-2-enyl diphosphate reductase (284 aa).

Residue C12 participates in [4Fe-4S] cluster binding. (2E)-4-hydroxy-3-methylbut-2-enyl diphosphate-binding residues include H40 and H72. H40 and H72 together coordinate dimethylallyl diphosphate. Residues H40 and H72 each coordinate isopentenyl diphosphate. C94 is a [4Fe-4S] cluster binding site. A (2E)-4-hydroxy-3-methylbut-2-enyl diphosphate-binding site is contributed by H122. A dimethylallyl diphosphate-binding site is contributed by H122. Residue H122 participates in isopentenyl diphosphate binding. E124 acts as the Proton donor in catalysis. T161 contributes to the (2E)-4-hydroxy-3-methylbut-2-enyl diphosphate binding site. C193 is a [4Fe-4S] cluster binding site. Residues S221, N223, and S264 each coordinate (2E)-4-hydroxy-3-methylbut-2-enyl diphosphate. Residues S221, N223, and S264 each coordinate dimethylallyl diphosphate. S221, N223, and S264 together coordinate isopentenyl diphosphate.

The protein belongs to the IspH family. [4Fe-4S] cluster serves as cofactor.

It carries out the reaction isopentenyl diphosphate + 2 oxidized [2Fe-2S]-[ferredoxin] + H2O = (2E)-4-hydroxy-3-methylbut-2-enyl diphosphate + 2 reduced [2Fe-2S]-[ferredoxin] + 2 H(+). The catalysed reaction is dimethylallyl diphosphate + 2 oxidized [2Fe-2S]-[ferredoxin] + H2O = (2E)-4-hydroxy-3-methylbut-2-enyl diphosphate + 2 reduced [2Fe-2S]-[ferredoxin] + 2 H(+). The protein operates within isoprenoid biosynthesis; dimethylallyl diphosphate biosynthesis; dimethylallyl diphosphate from (2E)-4-hydroxy-3-methylbutenyl diphosphate: step 1/1. Its pathway is isoprenoid biosynthesis; isopentenyl diphosphate biosynthesis via DXP pathway; isopentenyl diphosphate from 1-deoxy-D-xylulose 5-phosphate: step 6/6. Catalyzes the conversion of 1-hydroxy-2-methyl-2-(E)-butenyl 4-diphosphate (HMBPP) into a mixture of isopentenyl diphosphate (IPP) and dimethylallyl diphosphate (DMAPP). Acts in the terminal step of the DOXP/MEP pathway for isoprenoid precursor biosynthesis. This Dehalococcoides mccartyi (strain CBDB1) protein is 4-hydroxy-3-methylbut-2-enyl diphosphate reductase.